Reading from the N-terminus, the 89-residue chain is UPF0237 protein DIP1286 (89 aa).

The 75-residue stretch at Ile-4–Gln-78 folds into the ACT domain.

This sequence belongs to the UPF0237 family.

The protein is UPF0237 protein DIP1286 of Corynebacterium diphtheriae (strain ATCC 700971 / NCTC 13129 / Biotype gravis).